The chain runs to 865 residues: Protein fluG (865 aa).

The GS beta-grasp domain occupies 442–533 (PGVKYVWTQF…VMTWWKSEQG (92 aa)). The 326-residue stretch at 540–865 (PRTNLLNINN…ARRKWLVERY (326 aa)) folds into the GS catalytic domain.

This sequence belongs to the glutamine synthetase family.

It is found in the cytoplasm. Its function is as follows. May function as a GSI-related enzyme in synthesizing a small diffusible factor that acts as an extracellular signal directing asexual sporulation and perhaps other aspects of colony growth. May be involved in brlA activation (an early transcriptional regulator for conidiation specific gene). This is Protein fluG (fluG) from Emericella nidulans (strain FGSC A4 / ATCC 38163 / CBS 112.46 / NRRL 194 / M139) (Aspergillus nidulans).